We begin with the raw amino-acid sequence, 446 residues long: ATP synthase subunit b-delta (446 aa).

Residues 1–168 are ATP synthase subunit b; that stretch reads MSTFIGQLVG…PAAADVQYPL (168 aa). The helical transmembrane segment at 4–24 threads the bilayer; it reads FIGQLVGFAAIVFLVVRYVVP. The ATP synthase subunit delta stretch occupies residues 169-446; that stretch reads MTKMRSSSRV…LAAAEAQLPD (278 aa).

This sequence in the N-terminal section; belongs to the ATPase B chain family. It in the C-terminal section; belongs to the ATPase delta chain family. In terms of assembly, F-type ATPases have 2 components, F(1) - the catalytic core - and F(0) - the membrane proton channel. F(1) has five subunits: alpha(3), beta(3), gamma(1), delta(1), epsilon(1). F(0) has three main subunits: a(1), b(2) and c(10-14). The alpha and beta chains form an alternating ring which encloses part of the gamma chain. F(1) is attached to F(0) by a central stalk formed by the gamma and epsilon chains, while a peripheral stalk is formed by the delta and b chains.

The protein resides in the cell membrane. F(1)F(0) ATP synthase produces ATP from ADP in the presence of a proton or sodium gradient. F-type ATPases consist of two structural domains, F(1) containing the extramembraneous catalytic core and F(0) containing the membrane proton channel, linked together by a central stalk and a peripheral stalk. During catalysis, ATP synthesis in the catalytic domain of F(1) is coupled via a rotary mechanism of the central stalk subunits to proton translocation. In terms of biological role, this fusion protein includes a component of the F(0) channel (subunit b) and of the F(1) subunit (subunit delta). Two copies of subunit b and one of delta together form the peripheral 'stator' stalk which links F(1) to F(0). This is ATP synthase subunit b-delta (atpFH) from Mycobacterium avium (strain 104).